A 100-amino-acid chain; its full sequence is TACTTTQQTAAFVALVSVLSTDNFNQCSTDSGYSMLTATALPTTEQYTKMCASTACQGMIQTIIAANAPDCELTVPTSGLVLNVYEYANGFSAKCSSLSS.

3 disulfides stabilise this stretch: Cys-3/Cys-71, Cys-27/Cys-56, and Cys-51/Cys-95.

This sequence belongs to the elicitin family.

Its subcellular location is the secreted. Its function is as follows. Induces local and distal defense responses (incompatible hypersensitive reaction) in plants from the solanaceae and cruciferae families. Elicits leaf necrosis and causes the accumulation of pathogenesis-related proteins. Might interact with the lipidic molecules of the plasma membrane. The chain is Elicitin Vex2 from Phytopythium vexans (Damping-off fungus).